The following is an 88-amino-acid chain: Cell division topological specificity factor (88 aa).

The protein belongs to the MinE family.

Functionally, prevents the cell division inhibition by proteins MinC and MinD at internal division sites while permitting inhibition at polar sites. This ensures cell division at the proper site by restricting the formation of a division septum at the midpoint of the long axis of the cell. In Escherichia coli (strain SMS-3-5 / SECEC), this protein is Cell division topological specificity factor.